An 843-amino-acid chain; its full sequence is Protein P (843 aa).

A terminal protein domain (TP) region spans residues 1 to 177 (MPLSYQHFRK…FCGSPYSWEQ (177 aa)). The segment at 178–346 (DLQHGRLVFQ…YCLYHIVNLI (169 aa)) is spacer. Residues 219 to 250 (RKSRLGPQPAQGQLAGRQQGGSGSIRARVHPS) form a disordered region. Positions 223–235 (LGPQPAQGQLAGR) are enriched in low complexity. Residues 347-690 (EDWGPCTEHG…YLNLYPVARQ (344 aa)) form a polymerase/reverse transcriptase domain (RT) region. In terms of domain architecture, Reverse transcriptase spans 357–600 (EHRIRTPRTP…YSLNFMGYVI (244 aa)). Mg(2+) is bound by residues aspartate 429, aspartate 551, and aspartate 552.

The protein belongs to the hepadnaviridae P protein family.

It catalyses the reaction DNA(n) + a 2'-deoxyribonucleoside 5'-triphosphate = DNA(n+1) + diphosphate. The enzyme catalyses Endonucleolytic cleavage to 5'-phosphomonoester.. With respect to regulation, activated by host HSP70 and HSP40 in vitro to be able to bind the epsilon loop of the pgRNA. Because deletion of the RNase H region renders the protein partly chaperone-independent, the chaperones may be needed indirectly to relieve occlusion of the RNA-binding site by this domain. Inhibited by several reverse-transcriptase inhibitors: Lamivudine, Adefovir and Entecavir. Functionally, multifunctional enzyme that converts the viral RNA genome into dsDNA in viral cytoplasmic capsids. This enzyme displays a DNA polymerase activity that can copy either DNA or RNA templates, and a ribonuclease H (RNase H) activity that cleaves the RNA strand of RNA-DNA heteroduplexes in a partially processive 3'- to 5'-endonucleasic mode. Neo-synthesized pregenomic RNA (pgRNA) are encapsidated together with the P protein, and reverse-transcribed inside the nucleocapsid. Initiation of reverse-transcription occurs first by binding the epsilon loop on the pgRNA genome, and is initiated by protein priming, thereby the 5'-end of (-)DNA is covalently linked to P protein. Partial (+)DNA is synthesized from the (-)DNA template and generates the relaxed circular DNA (RC-DNA) genome. After budding and infection, the RC-DNA migrates in the nucleus, and is converted into a plasmid-like covalently closed circular DNA (cccDNA). The activity of P protein does not seem to be necessary for cccDNA generation, and is presumably released from (+)DNA by host nuclear DNA repair machinery. This chain is Protein P, found in Hepatitis B virus genotype B2 (isolate Vietnam/16091/1992) (HBV-B).